We begin with the raw amino-acid sequence, 897 residues long: Transportin-2 (897 aa).

HEAT repeat units lie at residues 9-36 (GLQQ…DKLK), 41-79 (FPDF…AHYQ), 88-121 (FIKQ…KGEL), 127-164 (LLPQ…LDSD), 171-201 (NIMI…QFIM), 214-241 (FIEH…VMLL), 253-280 (HSII…FWLT), 296-386 (VQLI…LANV), 394-422 (HLLP…GAIA), 434-461 (PELI…TLSR), 475-508 (LKPL…EEEA), 516-549 (LSYI…ADSV), 557-595 (EYIQ…TALQ), 603-654 (EPVY…GLGG), 665-696 (IMTL…KACF), 704-737 (AEFM…MQMG), 745-790 (QMVL…YVCP), 798-831 (QQFI…IGVN), 840-871 (IFFC…KDQV), and 874-894 (DNWQ…LAAF). Residues 31-99 (VQDKLKQLNQ…KQECLNNIGD (69 aa)) form the Importin N-terminal domain. The tract at residues 325–364 (AVPDSEQDIKPRFHKSRTVTLPHEAERPDGSEDAEDDDDD) is disordered. Over residues 355-364 (SEDAEDDDDD) the composition is skewed to acidic residues. Lysine 862 carries the post-translational modification N6-acetyllysine.

This sequence belongs to the importin beta family. Importin beta-2 subfamily.

The protein resides in the cytoplasm. It localises to the nucleus. In terms of biological role, probably functions in nuclear protein import as nuclear transport receptor. Serves as receptor for nuclear localization signals (NLS) in cargo substrates. Is thought to mediate docking of the importin/substrate complex to the nuclear pore complex (NPC) through binding to nucleoporin and the complex is subsequently translocated through the pore by an energy requiring, Ran-dependent mechanism. At the nucleoplasmic side of the NPC, Ran binds to the importin, the importin/substrate complex dissociates and importin is re-exported from the nucleus to the cytoplasm where GTP hydrolysis releases Ran. The directionality of nuclear import is thought to be conferred by an asymmetric distribution of the GTP- and GDP-bound forms of Ran between the cytoplasm and nucleus. This is Transportin-2 (TNPO2) from Homo sapiens (Human).